The following is a 310-amino-acid chain: HPr kinase/phosphorylase (310 aa).

Catalysis depends on residues H138 and K159. 153-160 serves as a coordination point for ATP; sequence GDSGIGKS. S160 contributes to the Mg(2+) binding site. The Proton acceptor; for phosphorylation activity. Proton donor; for dephosphorylation activity role is filled by D177. Residues 201-210 are important for the catalytic mechanism of both phosphorylation and dephosphorylation; it reads LEIRGVGIID. E202 contacts Mg(2+). The active site involves R243. Positions 264-269 are important for the catalytic mechanism of dephosphorylation; it reads PVKTGR.

The protein belongs to the HPrK/P family. In terms of assembly, homohexamer. It depends on Mg(2+) as a cofactor.

It catalyses the reaction [HPr protein]-L-serine + ATP = [HPr protein]-O-phospho-L-serine + ADP + H(+). The catalysed reaction is [HPr protein]-O-phospho-L-serine + phosphate + H(+) = [HPr protein]-L-serine + diphosphate. In terms of biological role, catalyzes the ATP- as well as the pyrophosphate-dependent phosphorylation of a specific serine residue in HPr, a phosphocarrier protein of the phosphoenolpyruvate-dependent sugar phosphotransferase system (PTS). HprK/P also catalyzes the pyrophosphate-producing, inorganic phosphate-dependent dephosphorylation (phosphorolysis) of seryl-phosphorylated HPr (P-Ser-HPr). The two antagonistic activities of HprK/P are regulated by several intracellular metabolites, which change their concentration in response to the absence or presence of rapidly metabolisable carbon sources (glucose, fructose, etc.) in the growth medium. Therefore, by controlling the phosphorylation state of HPr, HPrK/P is a sensor enzyme that plays a major role in the regulation of carbon metabolism and sugar transport: it mediates carbon catabolite repression (CCR), and regulates PTS-catalyzed carbohydrate uptake and inducer exclusion. This chain is HPr kinase/phosphorylase (hprK), found in Streptococcus pyogenes serotype M1.